We begin with the raw amino-acid sequence, 426 residues long: Serine/threonine-protein kinase ssn3 (426 aa).

Residues 41 to 368 (YHIVGFISSG…AREALEHPYF (328 aa)) form the Protein kinase domain. ATP is bound by residues 47–55 (ISSGTYGRV) and Lys71. The active-site Proton acceptor is the Asp173. Residues 390-426 (RVTQDDNDIRSGSLPGTKRSGLPDDSLMGRAAKRLKE) form a disordered region.

Belongs to the protein kinase superfamily. CMGC Ser/Thr protein kinase family. CDC2/CDKX subfamily. As to quaternary structure, component of the srb8-11 complex, a regulatory module of the Mediator complex. Mg(2+) is required as a cofactor.

Its subcellular location is the nucleus. It carries out the reaction L-seryl-[protein] + ATP = O-phospho-L-seryl-[protein] + ADP + H(+). The enzyme catalyses L-threonyl-[protein] + ATP = O-phospho-L-threonyl-[protein] + ADP + H(+). It catalyses the reaction [DNA-directed RNA polymerase] + ATP = phospho-[DNA-directed RNA polymerase] + ADP + H(+). Its function is as follows. Component of the srb8-11 complex. The srb8-11 complex is a regulatory module of the Mediator complex which is itself dependent transcription. The srb8-11 complex may be involved in the transcriptional repression of a subset of genes regulated by Mediator. It may inhibit the association of the Mediator complex with RNA polymerase II to form the holoenzyme complex. The srb8-11 complex phosphorylates the C-terminal domain (CTD) of the largest subunit of RNA polymerase II. The protein is Serine/threonine-protein kinase ssn3 (ssn3) of Neosartorya fischeri (strain ATCC 1020 / DSM 3700 / CBS 544.65 / FGSC A1164 / JCM 1740 / NRRL 181 / WB 181) (Aspergillus fischerianus).